An 856-amino-acid chain; its full sequence is Leucine--tRNA ligase (856 aa).

Residues 53-63 (PYPSGNLHMGH) carry the 'HIGH' region motif. Residues 622–626 (KMSKS) carry the 'KMSKS' region motif. Residue Lys625 coordinates ATP.

This sequence belongs to the class-I aminoacyl-tRNA synthetase family.

It is found in the cytoplasm. The enzyme catalyses tRNA(Leu) + L-leucine + ATP = L-leucyl-tRNA(Leu) + AMP + diphosphate. In Prochlorococcus marinus (strain AS9601), this protein is Leucine--tRNA ligase.